Reading from the N-terminus, the 273-residue chain is NADPH-dependent 7-cyano-7-deazaguanine reductase (273 aa).

80-82 (IES) lines the substrate pocket. 82–83 (SK) is a binding site for NADPH. Cysteine 180 acts as the Thioimide intermediate in catalysis. Aspartate 187 (proton donor) is an active-site residue. 219-220 (HE) provides a ligand contact to substrate. 248–249 (RG) is a binding site for NADPH.

Belongs to the GTP cyclohydrolase I family. QueF type 2 subfamily. Homodimer.

It localises to the cytoplasm. The enzyme catalyses 7-aminomethyl-7-carbaguanine + 2 NADP(+) = 7-cyano-7-deazaguanine + 2 NADPH + 3 H(+). It functions in the pathway tRNA modification; tRNA-queuosine biosynthesis. Catalyzes the NADPH-dependent reduction of 7-cyano-7-deazaguanine (preQ0) to 7-aminomethyl-7-deazaguanine (preQ1). The sequence is that of NADPH-dependent 7-cyano-7-deazaguanine reductase from Bordetella avium (strain 197N).